Here is a 353-residue protein sequence, read N- to C-terminus: Photosystem II protein D1 (353 aa).

N-acetylthreonine is present on Thr2. Thr2 carries the phosphothreonine modification. The next 3 helical transmembrane spans lie at Tyr29–Ser46, His118–Leu133, and Trp142–Ala156. His118 lines the chlorophyll a pocket. Tyr126 lines the pheophytin a pocket. [CaMn4O5] cluster contacts are provided by Asp170 and Glu189. Residues Phe197–Leu218 form a helical membrane-spanning segment. His198 lines the chlorophyll a pocket. A quinone-binding positions include His215 and Ser264 to Phe265. His215 contacts Fe cation. His272 is a binding site for Fe cation. A helical membrane pass occupies residues Phe274 to Leu288. 4 residues coordinate [CaMn4O5] cluster: His332, Glu333, Asp342, and Ala344. Residues Ala345 to Gly353 constitute a propeptide that is removed on maturation.

Belongs to the reaction center PufL/M/PsbA/D family. PSII is composed of 1 copy each of membrane proteins PsbA, PsbB, PsbC, PsbD, PsbE, PsbF, PsbH, PsbI, PsbJ, PsbK, PsbL, PsbM, PsbT, PsbX, PsbY, PsbZ, Psb30/Ycf12, at least 3 peripheral proteins of the oxygen-evolving complex and a large number of cofactors. It forms dimeric complexes. The D1/D2 heterodimer binds P680, chlorophylls that are the primary electron donor of PSII, and subsequent electron acceptors. It shares a non-heme iron and each subunit binds pheophytin, quinone, additional chlorophylls, carotenoids and lipids. D1 provides most of the ligands for the Mn4-Ca-O5 cluster of the oxygen-evolving complex (OEC). There is also a Cl(-1) ion associated with D1 and D2, which is required for oxygen evolution. The PSII complex binds additional chlorophylls, carotenoids and specific lipids. is required as a cofactor. Post-translationally, tyr-161 forms a radical intermediate that is referred to as redox-active TyrZ, YZ or Y-Z. C-terminally processed by CTPA; processing is essential to allow assembly of the oxygen-evolving complex and thus photosynthetic growth.

Its subcellular location is the plastid. It localises to the chloroplast thylakoid membrane. The enzyme catalyses 2 a plastoquinone + 4 hnu + 2 H2O = 2 a plastoquinol + O2. In terms of biological role, photosystem II (PSII) is a light-driven water:plastoquinone oxidoreductase that uses light energy to abstract electrons from H(2)O, generating O(2) and a proton gradient subsequently used for ATP formation. It consists of a core antenna complex that captures photons, and an electron transfer chain that converts photonic excitation into a charge separation. The D1/D2 (PsbA/PsbD) reaction center heterodimer binds P680, the primary electron donor of PSII as well as several subsequent electron acceptors. The sequence is that of Photosystem II protein D1 from Citrus sinensis (Sweet orange).